Reading from the N-terminus, the 223-residue chain is Putative HTLV-1-related endogenous sequence (223 aa).

Residues 1 to 19 (MRCAHAPAPRTRYPTRAPS) show a composition bias toward low complexity. Residues 1 to 184 (MRCAHAPAPR…ARAHGEAGAG (184 aa)) are disordered. Over residues 115-126 (GDRRREGPDRSP) the composition is skewed to basic and acidic residues. Residues 133–157 (PAAAAQPDSSSAQAPGPSTLRPAAT) are compositionally biased toward low complexity.

This is Putative HTLV-1-related endogenous sequence (HRES1) from Homo sapiens (Human).